The sequence spans 469 residues: Glutamate--tRNA ligase (469 aa).

The 'HIGH' region motif lies at 11–21 (PSPTGFIHLGN). Residues 243-247 (KMSKR) carry the 'KMSKS' region motif. Lys-246 lines the ATP pocket.

This sequence belongs to the class-I aminoacyl-tRNA synthetase family. Glutamate--tRNA ligase type 1 subfamily. As to quaternary structure, monomer.

It is found in the cytoplasm. The enzyme catalyses tRNA(Glu) + L-glutamate + ATP = L-glutamyl-tRNA(Glu) + AMP + diphosphate. Catalyzes the attachment of glutamate to tRNA(Glu) in a two-step reaction: glutamate is first activated by ATP to form Glu-AMP and then transferred to the acceptor end of tRNA(Glu). This chain is Glutamate--tRNA ligase, found in Burkholderia cenocepacia (strain HI2424).